A 311-amino-acid polypeptide reads, in one-letter code: Lipoyl synthase (311 aa).

Residues C47, C52, C58, C73, C77, C80, and S286 each coordinate [4Fe-4S] cluster. In terms of domain architecture, Radical SAM core spans W59 to F276.

It belongs to the radical SAM superfamily. Lipoyl synthase family. It depends on [4Fe-4S] cluster as a cofactor.

The protein resides in the cytoplasm. It catalyses the reaction [[Fe-S] cluster scaffold protein carrying a second [4Fe-4S](2+) cluster] + N(6)-octanoyl-L-lysyl-[protein] + 2 oxidized [2Fe-2S]-[ferredoxin] + 2 S-adenosyl-L-methionine + 4 H(+) = [[Fe-S] cluster scaffold protein] + N(6)-[(R)-dihydrolipoyl]-L-lysyl-[protein] + 4 Fe(3+) + 2 hydrogen sulfide + 2 5'-deoxyadenosine + 2 L-methionine + 2 reduced [2Fe-2S]-[ferredoxin]. Its pathway is protein modification; protein lipoylation via endogenous pathway; protein N(6)-(lipoyl)lysine from octanoyl-[acyl-carrier-protein]: step 2/2. Its function is as follows. Catalyzes the radical-mediated insertion of two sulfur atoms into the C-6 and C-8 positions of the octanoyl moiety bound to the lipoyl domains of lipoate-dependent enzymes, thereby converting the octanoylated domains into lipoylated derivatives. In Chlamydia trachomatis serovar D (strain ATCC VR-885 / DSM 19411 / UW-3/Cx), this protein is Lipoyl synthase.